Consider the following 225-residue polypeptide: Superantigen-like protein 11 (225 aa).

Positions 1 to 30 are cleaved as a signal peptide; it reads MKLKNIAKASLALGILTTGMITTTAQPVKA. Residues 94-196 are sialyl Lewis X-binding; the sequence is VDIFVVRENS…RITMKDGGFY (103 aa).

The protein belongs to the staphylococcal/streptococcal toxin family. As to quaternary structure, homodimer (via its C-terminal domain). Interacts with host FCAR and SELPLG (via sialyl Lewis X).

It is found in the secreted. Secreted protein that plays a role in the inhibition of host immune system. Targets myeloid cells such as monocytes or granulocytes through binding with sialyllactosamine-containing glycoproteins. Prevents initial rolling of neutrophils toward the site of infection by interacting with host SELPLG. Disrupts neutrophil motility by induction of cell adhesion via interacting with glycans but independently of SELPLG. In Staphylococcus aureus (strain Newman), this protein is Superantigen-like protein 11.